Here is a 308-residue protein sequence, read N- to C-terminus: Ornithine carbamoyltransferase (308 aa).

Carbamoyl phosphate is bound by residues 56-59, glutamine 83, arginine 107, and 134-137; these read STRT and HPCQ. L-ornithine is bound by residues asparagine 165, aspartate 225, and 229–230; that span reads SM. Residues 266–267 and arginine 294 each bind carbamoyl phosphate; that span reads CL.

This sequence belongs to the aspartate/ornithine carbamoyltransferase superfamily. OTCase family.

It is found in the cytoplasm. It carries out the reaction carbamoyl phosphate + L-ornithine = L-citrulline + phosphate + H(+). The protein operates within amino-acid biosynthesis; L-arginine biosynthesis; L-arginine from L-ornithine and carbamoyl phosphate: step 1/3. In terms of biological role, reversibly catalyzes the transfer of the carbamoyl group from carbamoyl phosphate (CP) to the N(epsilon) atom of ornithine (ORN) to produce L-citrulline. The chain is Ornithine carbamoyltransferase from Cereibacter sphaeroides (strain ATCC 17029 / ATH 2.4.9) (Rhodobacter sphaeroides).